The chain runs to 268 residues: MSFEINWQDLGEDEAVNDSIKSFLNSHLQSISLPSYVSSLQVTDFCLGGIPPNITLREISDPLDEFYNHIEKEELPKDKIPEESDSGCQSADGENGDLLPEVQAESDLQFLVEVDYKGDMRIGVSAELALNYPSPSFMTLPVKLSITDLGIHALCLVAYISKQLFVSFLCDVADPILDARESLIDLGSSAILGKKSLERISLIRSIKIDSEIGEQNNVEGSVLRSVGKLEQFLLEVFRTILKKEAAWPSWINLDFNEDPSGNESSDED.

In terms of domain architecture, SMP-LTD spans 1 to 256 (MSFEINWQDL…WPSWINLDFN (256 aa)). Residues 75 to 94 (LPKDKIPEESDSGCQSADGE) form a disordered region.

The protein belongs to the MDM12 family. Component of the ER-mitochondria encounter structure (ERMES) or MDM complex, composed of MMM1, MDM10, MDM12 and MDM34. An MMM1 homodimer associates with one molecule of MDM12 on each side in a pairwise head-to-tail manner, and the SMP-LTD domains of MMM1 and MDM12 generate a continuous hydrophobic tunnel for phospholipid trafficking.

The protein resides in the mitochondrion outer membrane. Its subcellular location is the endoplasmic reticulum membrane. In terms of biological role, component of the ERMES/MDM complex, which serves as a molecular tether to connect the endoplasmic reticulum (ER) and mitochondria. Components of this complex are involved in the control of mitochondrial shape and protein biogenesis, and function in nonvesicular lipid trafficking between the ER and mitochondria. MDM12 is required for the interaction of the ER-resident membrane protein MMM1 and the outer mitochondrial membrane-resident beta-barrel protein MDM10. The MDM12-MMM1 subcomplex functions in the major beta-barrel assembly pathway that is responsible for biogenesis of all mitochondrial outer membrane beta-barrel proteins, and acts in a late step after the SAM complex. The MDM10-MDM12-MMM1 subcomplex further acts in the TOM40-specific pathway after the action of the MDM12-MMM1 complex. Essential for establishing and maintaining the structure of mitochondria and maintenance of mtDNA nucleoids. The protein is Mitochondrial distribution and morphology protein 12 of Lachancea thermotolerans (strain ATCC 56472 / CBS 6340 / NRRL Y-8284) (Yeast).